Reading from the N-terminus, the 449-residue chain is 23S rRNA (uracil(1939)-C(5))-methyltransferase RlmD (449 aa).

A TRAM domain is found at 12–70 (SKQLSAKQSFSVHQLDHLGAGIAQHQGKVVFIPGALPNETVQAQLTEQKKNYARAKLIK). [4Fe-4S] cluster-binding residues include Cys83, Cys89, Cys92, and Cys170. 6 residues coordinate S-adenosyl-L-methionine: Gln282, Phe311, Asn316, Glu332, Asp359, and Asp379. Residue Cys405 is the Nucleophile of the active site.

This sequence belongs to the class I-like SAM-binding methyltransferase superfamily. RNA M5U methyltransferase family. RlmD subfamily.

It catalyses the reaction uridine(1939) in 23S rRNA + S-adenosyl-L-methionine = 5-methyluridine(1939) in 23S rRNA + S-adenosyl-L-homocysteine + H(+). Catalyzes the formation of 5-methyl-uridine at position 1939 (m5U1939) in 23S rRNA. This is 23S rRNA (uracil(1939)-C(5))-methyltransferase RlmD from Shewanella sp. (strain ANA-3).